Consider the following 263-residue polypeptide: Endonuclease 8 (263 aa).

P2 (schiff-base intermediate with DNA) is an active-site residue. Residue E3 is the Proton donor of the active site. K53 serves as the catalytic Proton donor; for beta-elimination activity. Residues Q70, R125, and N169 each contribute to the DNA site. Residues 229 to 263 (KVFHRDGEACERCGGIIEKTTLSSRPFYWCPHCQK) form an FPG-type zinc finger. R253 acts as the Proton donor; for delta-elimination activity in catalysis.

Belongs to the FPG family. It depends on Zn(2+) as a cofactor.

The enzyme catalyses 2'-deoxyribonucleotide-(2'-deoxyribose 5'-phosphate)-2'-deoxyribonucleotide-DNA = a 3'-end 2'-deoxyribonucleotide-(2,3-dehydro-2,3-deoxyribose 5'-phosphate)-DNA + a 5'-end 5'-phospho-2'-deoxyribonucleoside-DNA + H(+). Its function is as follows. Involved in base excision repair of DNA damaged by oxidation or by mutagenic agents. Acts as a DNA glycosylase that recognizes and removes damaged bases. Has a preference for oxidized pyrimidines, such as thymine glycol, 5,6-dihydrouracil and 5,6-dihydrothymine. Has AP (apurinic/apyrimidinic) lyase activity and introduces nicks in the DNA strand. Cleaves the DNA backbone by beta-delta elimination to generate a single-strand break at the site of the removed base with both 3'- and 5'-phosphates. This chain is Endonuclease 8, found in Salmonella paratyphi A (strain AKU_12601).